Here is a 415-residue protein sequence, read N- to C-terminus: T-cell-specific guanine nucleotide triphosphate-binding protein 1 (415 aa).

Residues 55 to 237 form the IRG-type G domain; sequence APLHIAVTGE…PKLETKLLQD (183 aa). 4 residues coordinate GDP: glycine 66, glycine 68, lysine 69, and serine 70. The residue at position 89 (threonine 89) is a (Microbial infection) Phosphothreonine; by ROP17. Positions 90, 171, 173, and 219 each coordinate GDP.

Belongs to the TRAFAC class dynamin-like GTPase superfamily. IRG family. As to quaternary structure, monomer, homodimer or homotetramer in the presence of GTP. Forms higher order homooligomers in GTP-dependent manner. In terms of assembly, (Microbial infection) Interacts with Toxoplasma gondii ROP18. (Microbial infection) Phosphorylated by Toxoplasma gondii ROP17; the phosphorylation leads to disassembly of IRGB6 (TGTP1/TGTP2) polymers into monomers and dimers. Phosphorylated by Toxoplasma gondii ROP18. As to expression, expressed in thymus and lymph nodes, predominantly T-cells. Not expressed by immature CD4(+) CD8(+) thymocytes (at protein level). Expressed in IFNG-stimulated macrophages. Expressed at low levels in unstimulated astrocytes. Due to sequence similarity with Tgtp2, it is impossible to assign unambiguously experimental data published in the literature to Tgtp1 or Tgtp2 gene.

It is found in the cytoplasm. The protein resides in the endoplasmic reticulum. The protein localises to the golgi apparatus. It localises to the parasitophorous vacuole membrane. The catalysed reaction is GTP + H2O = GDP + phosphate + H(+). Functionally, involved in innate cell-autonomous resistance to intracellular pathogens, such as Toxoplasma gondii. During avirulent type II T.gondii infection, recruited to the parasitophorous vacuole (PV) membrane, leading to PV vesiculation and rupture, and subsequent digestion of the parasite within the cytosol. Not recruited to virulent type I T.gondii PV membrane. May confer an antiviral state for vesicular stomatitis virus. In Mus musculus (Mouse), this protein is T-cell-specific guanine nucleotide triphosphate-binding protein 1 (Tgtp1).